Consider the following 412-residue polypeptide: Multifunctional CCA protein (412 aa).

ATP contacts are provided by Gly8 and Arg11. CTP-binding residues include Gly8 and Arg11. 2 residues coordinate Mg(2+): Glu21 and Asp23. Positions 91, 137, and 140 each coordinate ATP. CTP is bound by residues Arg91, Arg137, and Arg140. An HD domain is found at Cys228–Leu329.

Belongs to the tRNA nucleotidyltransferase/poly(A) polymerase family. Bacterial CCA-adding enzyme type 1 subfamily. In terms of assembly, monomer. Can also form homodimers and oligomers. Requires Mg(2+) as cofactor. The cofactor is Ni(2+).

The enzyme catalyses a tRNA precursor + 2 CTP + ATP = a tRNA with a 3' CCA end + 3 diphosphate. It carries out the reaction a tRNA with a 3' CCA end + 2 CTP + ATP = a tRNA with a 3' CCACCA end + 3 diphosphate. Functionally, catalyzes the addition and repair of the essential 3'-terminal CCA sequence in tRNAs without using a nucleic acid template. Adds these three nucleotides in the order of C, C, and A to the tRNA nucleotide-73, using CTP and ATP as substrates and producing inorganic pyrophosphate. tRNA 3'-terminal CCA addition is required both for tRNA processing and repair. Also involved in tRNA surveillance by mediating tandem CCA addition to generate a CCACCA at the 3' terminus of unstable tRNAs. While stable tRNAs receive only 3'-terminal CCA, unstable tRNAs are marked with CCACCA and rapidly degraded. The polypeptide is Multifunctional CCA protein (Acinetobacter baumannii (strain SDF)).